A 476-amino-acid chain; its full sequence is Ribulose bisphosphate carboxylase large chain (476 aa).

Positions 1-2 (MS) are excised as a propeptide. An N-acetylproline modification is found at P3. N6,N6,N6-trimethyllysine is present on K14. Substrate-binding residues include N123 and T173. Catalysis depends on K175, which acts as the Proton acceptor. K177 contacts substrate. Mg(2+) contacts are provided by K201, D203, and E204. N6-carboxylysine is present on K201. H294 (proton acceptor) is an active-site residue. Positions 295, 327, and 379 each coordinate substrate.

It belongs to the RuBisCO large chain family. Type I subfamily. Heterohexadecamer of 8 large chains and 8 small chains; disulfide-linked. The disulfide link is formed within the large subunit homodimers. Mg(2+) serves as cofactor. In terms of processing, the disulfide bond which can form in the large chain dimeric partners within the hexadecamer appears to be associated with oxidative stress and protein turnover.

Its subcellular location is the plastid. It localises to the chloroplast. The enzyme catalyses 2 (2R)-3-phosphoglycerate + 2 H(+) = D-ribulose 1,5-bisphosphate + CO2 + H2O. It catalyses the reaction D-ribulose 1,5-bisphosphate + O2 = 2-phosphoglycolate + (2R)-3-phosphoglycerate + 2 H(+). RuBisCO catalyzes two reactions: the carboxylation of D-ribulose 1,5-bisphosphate, the primary event in carbon dioxide fixation, as well as the oxidative fragmentation of the pentose substrate in the photorespiration process. Both reactions occur simultaneously and in competition at the same active site. In Liriodendron tulipifera (Tuliptree), this protein is Ribulose bisphosphate carboxylase large chain.